The sequence spans 125 residues: Holo-[acyl-carrier-protein] synthase (125 aa).

The Mg(2+) site is built by Asp-6 and Glu-55.

This sequence belongs to the P-Pant transferase superfamily. AcpS family. It depends on Mg(2+) as a cofactor.

Its subcellular location is the cytoplasm. It catalyses the reaction apo-[ACP] + CoA = holo-[ACP] + adenosine 3',5'-bisphosphate + H(+). In terms of biological role, transfers the 4'-phosphopantetheine moiety from coenzyme A to a Ser of acyl-carrier-protein. The sequence is that of Holo-[acyl-carrier-protein] synthase from Chlorobium phaeovibrioides (strain DSM 265 / 1930) (Prosthecochloris vibrioformis (strain DSM 265)).